A 132-amino-acid polypeptide reads, in one-letter code: Small ribosomal subunit protein uS8 (132 aa).

The protein belongs to the universal ribosomal protein uS8 family. As to quaternary structure, part of the 30S ribosomal subunit. Contacts proteins S5 and S12.

One of the primary rRNA binding proteins, it binds directly to 16S rRNA central domain where it helps coordinate assembly of the platform of the 30S subunit. This is Small ribosomal subunit protein uS8 from Psychrobacter sp. (strain PRwf-1).